A 296-amino-acid chain; its full sequence is Probable ribosomal RNA small subunit methyltransferase A (296 aa).

Polar residues predominate over residues 1–16 (MTDATSGSDPDSTTPV). A disordered region spans residues 1-25 (MTDATSGSDPDSTTPVDLTGEDFRD). The S-adenosyl-L-methionine site is built by His-44, Leu-46, Gly-72, Glu-93, Asp-121, and Asn-136.

It belongs to the class I-like SAM-binding methyltransferase superfamily. rRNA adenine N(6)-methyltransferase family. RsmA subfamily.

It is found in the cytoplasm. In terms of biological role, specifically dimethylates two adjacent adenosines in the loop of a conserved hairpin near the 3'-end of 16S rRNA in the 30S particle. May play a critical role in biogenesis of 30S subunits. In Haloquadratum walsbyi (strain DSM 16790 / HBSQ001), this protein is Probable ribosomal RNA small subunit methyltransferase A.